Here is a 272-residue protein sequence, read N- to C-terminus: HTH-type transcriptional repressor AllR (272 aa).

The interval 1–20 (MTEVRRRGRPGQAEPTAQKG) is disordered. The HTH iclR-type domain maps to 21-83 (AQALERGIAI…SQLGWWHIGL (63 aa)). A DNA-binding region (H-T-H motif) is located at residues 43–62 (VSDISGSLDLPLSTTFRLLK). The IclR-ED domain maps to 98-267 (VLSVAGPFMH…AKDISTALGL (170 aa)). Glyoxylate contacts are provided by residues 154–156 (SGA), Asp207, Cys217, and 234–236 (SIS).

Negative regulator of allantoin and glyoxylate utilization operons. Binds to the gcl promoter and to the allS-allA intergenic region. This Salmonella typhi protein is HTH-type transcriptional repressor AllR (allR).